Reading from the N-terminus, the 216-residue chain is Sporozoite antigen (216 aa).

Positions 194–216 are disordered; it reads QQQQPSSYGAPPASSQQPSGFFW.

The protein is Sporozoite antigen of Eimeria tenella (Coccidian parasite).